The following is a 122-amino-acid chain: Large ribosomal subunit protein uL18 (122 aa).

A disordered region spans residues 1-25; that stretch reads MSTLSRKQQTQKRHRRLRRHLSGTA. Positions 9-21 are enriched in basic residues; sequence QTQKRHRRLRRHL.

The protein belongs to the universal ribosomal protein uL18 family. As to quaternary structure, part of the 50S ribosomal subunit; part of the 5S rRNA/L5/L18/L25 subcomplex. Contacts the 5S and 23S rRNAs.

This is one of the proteins that bind and probably mediate the attachment of the 5S RNA into the large ribosomal subunit, where it forms part of the central protuberance. The sequence is that of Large ribosomal subunit protein uL18 from Synechococcus sp. (strain CC9311).